The following is a 105-amino-acid chain: Probable tetrachloroethene reductive dehalogenase membrane anchor protein (105 aa).

3 helical membrane-spanning segments follow: residues 3 to 23 (IYDV…QYGI), 35 to 55 (IPLQ…LAWG), and 66 to 86 (AIGM…IITY).

This sequence belongs to the PceB family.

It is found in the cell membrane. In terms of biological role, may act as a membrane anchor for the tetrachloroethene reductive dehalogenase PceA. This Dehalobacter restrictus (strain DSM 9455 / PER-K23) protein is Probable tetrachloroethene reductive dehalogenase membrane anchor protein.